The following is a 244-amino-acid chain: tRNA (guanine-N(7)-)-methyltransferase (244 aa).

S-adenosyl-L-methionine contacts are provided by glutamate 75, glutamate 100, aspartate 127, and aspartate 150. Residue aspartate 150 is part of the active site. Substrate contacts are provided by residues lysine 154, aspartate 186, and threonine 223 to glutamate 226.

The protein belongs to the class I-like SAM-binding methyltransferase superfamily. TrmB family.

The enzyme catalyses guanosine(46) in tRNA + S-adenosyl-L-methionine = N(7)-methylguanosine(46) in tRNA + S-adenosyl-L-homocysteine. It participates in tRNA modification; N(7)-methylguanine-tRNA biosynthesis. In terms of biological role, catalyzes the formation of N(7)-methylguanine at position 46 (m7G46) in tRNA. The polypeptide is tRNA (guanine-N(7)-)-methyltransferase (Xylella fastidiosa (strain M12)).